We begin with the raw amino-acid sequence, 1232 residues long: Anion exchange protein 3 (1232 aa).

Over residues 1–11 (MANGVIPPPGG) the composition is skewed to pro residues. Disordered stretches follow at residues 1-316 (MANG…KLDR) and 429-499 (NDDK…DSHR). The Cytoplasmic portion of the chain corresponds to 1–708 (MANGVIPPPG…DLRDALHSQC (708 aa)). The segment covering 58 to 75 (DPEKPSRSYSERDFEFHR) has biased composition (basic and acidic residues). Basic residues-rich tracts occupy residues 76–97 (HTSH…KLRR) and 104–113 (RHTRRKRKKE). Over residues 134-152 (VDEEEEEEEEEEGESEAEP) the composition is skewed to acidic residues. 4 positions are modified to phosphoserine: Ser-167, Ser-170, Ser-175, and Ser-198. Basic and acidic residues predominate over residues 267-279 (DDMKSHRLEDNPG). The span at 280–289 (VRRHLVKKPS) shows a compositional bias: basic residues. Residue Arg-295 is modified to Omega-N-methylarginine. The span at 305 to 316 (LRRKKKKKKLDR) shows a compositional bias: basic residues. Over residues 440 to 450 (NPSSSSMNSVL) the composition is skewed to polar residues. Residues 481 to 499 (HDPDAKEKPLHMPGGDSHR) show a composition bias toward basic and acidic residues. Transmembrane regions (helical) follow at residues 709–731 (VAAV…GLLG), 737–774 (LMGV…LLVF), 794–816 (VWVG…SFLV), 826–847 (IFAF…YKVF), and 893–910 (ALLS…AFFL). The membrane (anion exchange) stretch occupies residues 709–1232 (VAAVLFIYFA…DEYNELHMPV (524 aa)). Topologically, residues 911-925 (RKFRNSRFLGGKARR) are cytoplasmic. The next 5 membrane-spanning stretches (helical) occupy residues 926 to 946 (IIGD…DYSI), 980 to 1002 (PFPP…LIFM), 1028 to 1049 (LLLI…LTAA), 1083 to 1128 (VTGV…IQLS), and 1155 to 1191 (MHLF…TVPL). A lipid anchor (S-palmitoyl cysteine) is attached at Cys-1165.

It belongs to the anion exchanger (TC 2.A.31) family.

It is found in the cell membrane. It catalyses the reaction hydrogencarbonate(in) + chloride(out) = hydrogencarbonate(out) + chloride(in). Its function is as follows. Sodium-independent anion exchanger which mediates the electroneutral exchange of chloride for bicarbonate ions across the cell membrane. May be involved in the regulation of intracellular pH, and the modulation of cardiac action potential. This chain is Anion exchange protein 3 (SLC4A3), found in Plecturocebus moloch (Dusky titi monkey).